A 239-amino-acid chain; its full sequence is Large ribosomal subunit protein uL1 (239 aa).

It belongs to the universal ribosomal protein uL1 family. Part of the 50S ribosomal subunit.

Functionally, binds directly to 23S rRNA. The L1 stalk is quite mobile in the ribosome, and is involved in E site tRNA release. In terms of biological role, protein L1 is also a translational repressor protein, it controls the translation of the L11 operon by binding to its mRNA. The chain is Large ribosomal subunit protein uL1 from Rhodococcus erythropolis (strain PR4 / NBRC 100887).